Here is a 542-residue protein sequence, read N- to C-terminus: Glutamyl-tRNA(Gln) amidotransferase subunit A, mitochondrial (542 aa).

Residues Lys-55 and Ser-143 each act as charge relay system in the active site. The Acyl-ester intermediate role is filled by Ser-167.

The protein belongs to the amidase family. GatA subfamily. As to quaternary structure, subunit of the heterotrimeric GatCAB amidotransferase (AdT) complex, composed of A, B and C subunits.

Its subcellular location is the mitochondrion. The enzyme catalyses L-glutamyl-tRNA(Gln) + L-glutamine + ATP + H2O = L-glutaminyl-tRNA(Gln) + L-glutamate + ADP + phosphate + H(+). Functionally, allows the formation of correctly charged Gln-tRNA(Gln) through the transamidation of misacylated Glu-tRNA(Gln) in the mitochondria. The reaction takes place in the presence of glutamine and ATP through an activated gamma-phospho-Glu-tRNA(Gln). This Neurospora crassa (strain ATCC 24698 / 74-OR23-1A / CBS 708.71 / DSM 1257 / FGSC 987) protein is Glutamyl-tRNA(Gln) amidotransferase subunit A, mitochondrial.